A 307-amino-acid polypeptide reads, in one-letter code: Ribosomal RNA small subunit methyltransferase H (307 aa).

S-adenosyl-L-methionine-binding positions include 34–36 (GGH), Asp-54, Phe-79, Asp-101, and Gln-108.

It belongs to the methyltransferase superfamily. RsmH family.

The protein localises to the cytoplasm. It carries out the reaction cytidine(1402) in 16S rRNA + S-adenosyl-L-methionine = N(4)-methylcytidine(1402) in 16S rRNA + S-adenosyl-L-homocysteine + H(+). Its function is as follows. Specifically methylates the N4 position of cytidine in position 1402 (C1402) of 16S rRNA. This chain is Ribosomal RNA small subunit methyltransferase H, found in Vesicomyosocius okutanii subsp. Calyptogena okutanii (strain HA).